Consider the following 655-residue polypeptide: ATP-dependent zinc metalloprotease FtsH (655 aa).

The Cytoplasmic portion of the chain corresponds to 1–17 (MPIETEPNRTRKNFEPK). The helical transmembrane segment at 18–38 (RFGGSLFILFTLLLFLNLFVL) threads the bilayer. At 39 to 124 (RGPRFPITAY…APPPSSLSWL (86 aa)) the chain is on the lumenal side. A helical transmembrane segment spans residues 125–145 (PTLLGWVVPPLIFFGIWSWLI). Residues 146-655 (NRNQGAGPAA…LNSHQLIGIN (510 aa)) are Cytoplasmic-facing. 216–223 (GPPGTGKT) contributes to the ATP binding site. Residue histidine 440 participates in Zn(2+) binding. The active site involves glutamate 441. Zn(2+)-binding residues include histidine 444 and aspartate 517.

It in the central section; belongs to the AAA ATPase family. In the C-terminal section; belongs to the peptidase M41 family. As to quaternary structure, homohexamer. It depends on Zn(2+) as a cofactor.

The protein resides in the cellular thylakoid membrane. Functionally, acts as a processive, ATP-dependent zinc metallopeptidase for both cytoplasmic and membrane proteins. Plays a role in the quality control of integral membrane proteins. The sequence is that of ATP-dependent zinc metalloprotease FtsH from Acaryochloris marina (strain MBIC 11017).